The following is a 372-amino-acid chain: MTTAKINLLDFDRKGLRAFFSEELGEKAFRADQVMKWMYHFGCDDFDQMNNINKKLREKLKNKCEIRAPYVSEAQHSSDGTIKWAMKVGDQDVETVYIPDGDRATLCVSSQVGCALECKFCSTAQQGFNRNLKVSEIVGQIWRAAREIGLEKETGRRPITNVVMMGMGEPLLNMKNLIPALEIMLDDLGFALSKRRVTVSTSGVVSGLDQMTGKIDVALAISLHAPTDELRSQIMPINDRWDIDAFLASVRRYIASSNANRGRVTVEYVLLDHVNDDMDHARQLAELLKDTPAKINLIPFNPYPGSPYKKPSNSRIDRFMKTLMEYDYTVTIRKTRGDDIDAACGQLVGDVIDRTKRTKVKQQGEAIPVKTV.

Glu94 functions as the Proton acceptor in the catalytic mechanism. Residues 100–339 (DGDRATLCVS…VTIRKTRGDD (240 aa)) form the Radical SAM core domain. An intrachain disulfide couples Cys107 to Cys344. [4Fe-4S] cluster is bound by residues Cys114, Cys118, and Cys121. Residues 168–169 (GE), Ser200, 222–224 (SLH), and Asn301 each bind S-adenosyl-L-methionine. Catalysis depends on Cys344, which acts as the S-methylcysteine intermediate.

Belongs to the radical SAM superfamily. RlmN family. The cofactor is [4Fe-4S] cluster.

Its subcellular location is the cytoplasm. It carries out the reaction adenosine(2503) in 23S rRNA + 2 reduced [2Fe-2S]-[ferredoxin] + 2 S-adenosyl-L-methionine = 2-methyladenosine(2503) in 23S rRNA + 5'-deoxyadenosine + L-methionine + 2 oxidized [2Fe-2S]-[ferredoxin] + S-adenosyl-L-homocysteine. It catalyses the reaction adenosine(37) in tRNA + 2 reduced [2Fe-2S]-[ferredoxin] + 2 S-adenosyl-L-methionine = 2-methyladenosine(37) in tRNA + 5'-deoxyadenosine + L-methionine + 2 oxidized [2Fe-2S]-[ferredoxin] + S-adenosyl-L-homocysteine. Specifically methylates position 2 of adenine 2503 in 23S rRNA and position 2 of adenine 37 in tRNAs. m2A2503 modification seems to play a crucial role in the proofreading step occurring at the peptidyl transferase center and thus would serve to optimize ribosomal fidelity. The polypeptide is Dual-specificity RNA methyltransferase RlmN (Aliivibrio fischeri (strain MJ11) (Vibrio fischeri)).